The sequence spans 387 residues: 3-ketoacyl-CoA thiolase (387 aa).

Residue Cys-91 is the Acyl-thioester intermediate of the active site. Residues His-343 and Cys-373 each act as proton acceptor in the active site.

Belongs to the thiolase-like superfamily. Thiolase family. Heterotetramer of two alpha chains (FadB) and two beta chains (FadA).

It localises to the cytoplasm. It carries out the reaction an acyl-CoA + acetyl-CoA = a 3-oxoacyl-CoA + CoA. It functions in the pathway lipid metabolism; fatty acid beta-oxidation. Its function is as follows. Catalyzes the final step of fatty acid oxidation in which acetyl-CoA is released and the CoA ester of a fatty acid two carbons shorter is formed. The sequence is that of 3-ketoacyl-CoA thiolase from Klebsiella pneumoniae subsp. pneumoniae (strain ATCC 700721 / MGH 78578).